The chain runs to 260 residues: Diphthine synthase (260 aa).

Residues Leu9, Asp85, Ile88, 113-114 (TA), Leu168, Ala208, and His233 contribute to the S-adenosyl-L-methionine site.

This sequence belongs to the diphthine synthase family. Homodimer.

It catalyses the reaction 2-[(3S)-amino-3-carboxypropyl]-L-histidyl-[translation elongation factor 2] + 3 S-adenosyl-L-methionine = diphthine-[translation elongation factor 2] + 3 S-adenosyl-L-homocysteine + 3 H(+). The protein operates within protein modification; peptidyl-diphthamide biosynthesis. S-adenosyl-L-methionine-dependent methyltransferase that catalyzes the trimethylation of the amino group of the modified target histidine residue in translation elongation factor 2 (EF-2), to form an intermediate called diphthine. The three successive methylation reactions represent the second step of diphthamide biosynthesis. The protein is Diphthine synthase of Halobacterium salinarum (strain ATCC 29341 / DSM 671 / R1).